Here is a 126-residue protein sequence, read N- to C-terminus: E3 ubiquitin-protein ligase PPP1R11 (126 aa).

The interval 1–25 (MAEAGAGLSETVTETTVTVTTEPEN) is disordered. Alanine 2 carries the N-acetylalanine modification. The segment covering 10–22 (ETVTETTVTVTTE) has biased composition (low complexity). Positions 52 to 62 (HMGRRSSKCCC) are atypical RING finger domain 1. The tract at residues 70–126 (FGESSTESDEEEEEGCGHTHCVRGHRKGRRRATLGPTPTTPPQPPDPSQPPPGPMQH) is disordered. Serine 73 and serine 74 each carry phosphoserine. Threonine 75 is subject to Phosphothreonine. Serine 77 bears the Phosphoserine mark. Residues 85–94 (CGHTHCVRGH) are atypical RING finger domain 2. A compositionally biased stretch (basic residues) spans 89–101 (HCVRGHRKGRRRA). The span at 107-126 (PTTPPQPPDPSQPPPGPMQH) shows a compositional bias: pro residues. Phosphothreonine is present on threonine 109.

In terms of assembly, interacts with TLR2 and UBE2D2. In terms of processing, auto-ubiquitinated. Widely expressed.

It catalyses the reaction S-ubiquitinyl-[E2 ubiquitin-conjugating enzyme]-L-cysteine + [acceptor protein]-L-lysine = [E2 ubiquitin-conjugating enzyme]-L-cysteine + N(6)-ubiquitinyl-[acceptor protein]-L-lysine.. It participates in protein modification; protein ubiquitination. Atypical E3 ubiquitin-protein ligase which ubiquitinates TLR2 at 'Lys-754' leading to its degradation by the proteasome. Plays a role in regulating inflammatory cytokine release and gram-positive bacterial clearance by functioning, in part, through the ubiquitination and degradation of TLR2. Inhibitor of protein phosphatase 1. This is E3 ubiquitin-protein ligase PPP1R11 (PPP1R11) from Homo sapiens (Human).